The chain runs to 274 residues: MQNITQSWFVQGMIKATTDAWLKGWDERNGGNLTLRLDDADIAPYHDNFHQQPRYIPLSQPMPLLANTPFIVTGSGKFFRNVQLDPAANLGIVKVDSDGAGYHILWGLTNEAVPTSELPAHFLSHCERIKATNGKDRVIMHCHATNLIALTYVLENDTAVFTRQLWEGSTECLVVFPDGVGILPWMVPGTDEIGQATAQEMQKHSLMLWPFHGVFGSGPTLDETFGLIDTAEKSAQILVKVYSMGGMKQTISREELIALGQRFGVTPLASALAL.

Glu117 is an active-site residue. Residues His141, His143, and His212 each contribute to the Zn(2+) site.

It belongs to the aldolase class II family. RhaD subfamily. In terms of assembly, homotetramer. Zn(2+) is required as a cofactor.

Its subcellular location is the cytoplasm. It catalyses the reaction L-rhamnulose 1-phosphate = (S)-lactaldehyde + dihydroxyacetone phosphate. It functions in the pathway carbohydrate degradation; L-rhamnose degradation; glycerone phosphate from L-rhamnose: step 3/3. In terms of biological role, catalyzes the reversible cleavage of L-rhamnulose-1-phosphate to dihydroxyacetone phosphate (DHAP) and L-lactaldehyde. In Escherichia coli O6:H1 (strain CFT073 / ATCC 700928 / UPEC), this protein is Rhamnulose-1-phosphate aldolase.